The primary structure comprises 132 residues: Monothiol glutaredoxin-S9 (132 aa).

The disordered stretch occupies residues 16-38; the sequence is ASRPATAAAAPPPPPPRGEEEEV. The 97-residue stretch at 35–131 folds into the Glutaredoxin domain; sequence EEEVRRAVAE…PILKEAGALW (97 aa). Cys55 is a [2Fe-2S] cluster binding site. The Responsive for interaction with TGA factors signature appears at 129-132; sequence ALWL.

The protein belongs to the glutaredoxin family. CC-type subfamily.

Its subcellular location is the cytoplasm. It localises to the nucleus. Functionally, may only reduce GSH-thiol disulfides, but not protein disulfides. This chain is Monothiol glutaredoxin-S9 (GRXS9), found in Oryza sativa subsp. japonica (Rice).